The sequence spans 661 residues: mRNA 3'-end-processing protein RNA14 (661 aa).

Residues 1-37 (MSGNETPDAGTVKSVSPSSGGSSLPARPTLRERDPND) form a disordered region. Residues 14-23 (SVSPSSGGSS) show a composition bias toward low complexity. HAT repeat units follow at residues 67–99 (QQVA…WELE), 101–135 (EESG…YVRR), 149–181 (TVLK…FLEQ), 192–225 (SRVE…WEQE), 262–298 (SLPT…WELD), 307–339 (VLRQ…FVDE), and 513–548 (YNLD…FFEK).

It is found in the nucleus. The protein resides in the cytoplasm. Its function is as follows. Component of the cleavage factor IA (CFIA) complex, which is involved in the endonucleolytic cleavage during polyadenylation-dependent pre-mRNA 3'-end formation. This chain is mRNA 3'-end-processing protein RNA14 (RNA14), found in Eremothecium gossypii (strain ATCC 10895 / CBS 109.51 / FGSC 9923 / NRRL Y-1056) (Yeast).